The primary structure comprises 214 residues: Urease accessory protein UreG (214 aa).

The segment at 1-20 is disordered; it reads MSQLHAVPGRTKKLPPLRVG. 23 to 30 is a GTP binding site; the sequence is GPVGSGKT.

It belongs to the SIMIBI class G3E GTPase family. UreG subfamily. Homodimer. UreD, UreF and UreG form a complex that acts as a GTP-hydrolysis-dependent molecular chaperone, activating the urease apoprotein by helping to assemble the nickel containing metallocenter of UreC. The UreE protein probably delivers the nickel.

It is found in the cytoplasm. Facilitates the functional incorporation of the urease nickel metallocenter. This process requires GTP hydrolysis, probably effectuated by UreG. This Leptothrix cholodnii (strain ATCC 51168 / LMG 8142 / SP-6) (Leptothrix discophora (strain SP-6)) protein is Urease accessory protein UreG.